The following is a 200-amino-acid chain: ATP synthase subunit s, mitochondrial (200 aa).

A mitochondrion-targeting transit peptide spans M1–Y25. The tract at residues M1–M61 is N-terminal domain. G59 lines the Mg(2+) pocket. LRR repeat units lie at residues V62–I87, Q88–L116, C117–L141, and E142–L173. T93 contributes to the Mg(2+) binding site.

Belongs to the ATP synthase subunit s family. Homotetramer. Associates with ATP synthase.

It localises to the mitochondrion. The protein localises to the mitochondrion inner membrane. In terms of biological role, involved in regulation of mitochondrial membrane ATP synthase. Necessary for H(+) conduction of ATP synthase. Facilitates energy-driven catalysis of ATP synthesis by blocking a proton leak through an alternative proton exit pathway. The protein is ATP synthase subunit s, mitochondrial of Homo sapiens (Human).